The chain runs to 380 residues: Queuine tRNA-ribosyltransferase (380 aa).

Aspartate 96 serves as the catalytic Proton acceptor. Residues aspartate 96–phenylalanine 100, aspartate 150, glutamine 193, and glycine 220 each bind substrate. Residues glycine 251–serine 257 are RNA binding. Aspartate 270 functions as the Nucleophile in the catalytic mechanism. Positions threonine 275–arginine 279 are RNA binding; important for wobble base 34 recognition. Positions 308, 310, 313, and 339 each coordinate Zn(2+).

It belongs to the queuine tRNA-ribosyltransferase family. As to quaternary structure, homodimer. Within each dimer, one monomer is responsible for RNA recognition and catalysis, while the other monomer binds to the replacement base PreQ1. Zn(2+) serves as cofactor.

It carries out the reaction 7-aminomethyl-7-carbaguanine + guanosine(34) in tRNA = 7-aminomethyl-7-carbaguanosine(34) in tRNA + guanine. It functions in the pathway tRNA modification; tRNA-queuosine biosynthesis. Its function is as follows. Catalyzes the base-exchange of a guanine (G) residue with the queuine precursor 7-aminomethyl-7-deazaguanine (PreQ1) at position 34 (anticodon wobble position) in tRNAs with GU(N) anticodons (tRNA-Asp, -Asn, -His and -Tyr). Catalysis occurs through a double-displacement mechanism. The nucleophile active site attacks the C1' of nucleotide 34 to detach the guanine base from the RNA, forming a covalent enzyme-RNA intermediate. The proton acceptor active site deprotonates the incoming PreQ1, allowing a nucleophilic attack on the C1' of the ribose to form the product. After dissociation, two additional enzymatic reactions on the tRNA convert PreQ1 to queuine (Q), resulting in the hypermodified nucleoside queuosine (7-(((4,5-cis-dihydroxy-2-cyclopenten-1-yl)amino)methyl)-7-deazaguanosine). This is Queuine tRNA-ribosyltransferase from Streptococcus thermophilus (strain ATCC BAA-250 / LMG 18311).